The primary structure comprises 337 residues: Glutaredoxin-3 (337 aa).

Position 2 is an N-acetylalanine (Ala2). Residues 2–119 (AAGAAEAGEA…LTKKVQRHVS (118 aa)) form the Thioredoxin domain. Ser119 carries the post-translational modification Phosphoserine. Glutaredoxin domains lie at 144–238 (HAAP…PKLE) and 239–337 (ERLK…KGEN). 2 residues coordinate [2Fe-2S] cluster: Cys161 and Cys263.

As to quaternary structure, homodimer; the homodimer is independent of 2Fe-2S clusters. Heterotrimer; forms a heterotrimeric complex composed by two BOLA2 molecules and one GLRX3 molecule; linked by [2Fe-2S] clusters. Interacts (via N-terminus) with PRKCQ/PKC-theta. Interacts (via C-terminus) with CSRP3. Interacts with CSRP2.

It localises to the cytoplasm. Its subcellular location is the cytosol. The protein localises to the cell cortex. It is found in the myofibril. The protein resides in the sarcomere. It localises to the z line. In terms of biological role, together with BOLA2, acts as a cytosolic iron-sulfur (Fe-S) cluster assembly factor that facilitates [2Fe-2S] cluster insertion into a subset of cytosolic proteins. Acts as a critical negative regulator of cardiac hypertrophy and a positive inotropic regulator. Required for hemoglobin maturation. Does not possess any thyoredoxin activity since it lacks the conserved motif that is essential for catalytic activity. The sequence is that of Glutaredoxin-3 (Glrx3) from Mus musculus (Mouse).